Consider the following 1233-residue polypeptide: DNA-directed RNA polymerase subunit beta' (1233 aa).

Positions 61, 63, 76, and 79 each coordinate Zn(2+). Mg(2+) contacts are provided by D455, D457, and D459. Zn(2+) contacts are provided by C824, C898, C905, and C908. The segment covering 1211–1220 (ELQKAFDKEP) has biased composition (basic and acidic residues). The disordered stretch occupies residues 1211 to 1233 (ELQKAFDKEPASSTGNKASNSAK). Residues 1221 to 1233 (ASSTGNKASNSAK) show a composition bias toward polar residues.

It belongs to the RNA polymerase beta' chain family. As to quaternary structure, the RNAP catalytic core consists of 2 alpha, 1 beta, 1 beta' and 1 omega subunit. When a sigma factor is associated with the core the holoenzyme is formed, which can initiate transcription. The cofactor is Mg(2+). Zn(2+) serves as cofactor.

The catalysed reaction is RNA(n) + a ribonucleoside 5'-triphosphate = RNA(n+1) + diphosphate. DNA-dependent RNA polymerase catalyzes the transcription of DNA into RNA using the four ribonucleoside triphosphates as substrates. The sequence is that of DNA-directed RNA polymerase subunit beta' from Oenococcus oeni (strain ATCC BAA-331 / PSU-1).